Reading from the N-terminus, the 428-residue chain is Kynureninase (428 aa).

Residues Thr104, Thr105, 132–135 (FPSD), Asp213, His216, and Tyr238 contribute to the pyridoxal 5'-phosphate site. Lys239 bears the N6-(pyridoxal phosphate)lysine mark. Pyridoxal 5'-phosphate is bound by residues Trp267 and Thr295.

This sequence belongs to the kynureninase family. As to quaternary structure, homodimer. Requires pyridoxal 5'-phosphate as cofactor.

The catalysed reaction is L-kynurenine + H2O = anthranilate + L-alanine + H(+). The enzyme catalyses 3-hydroxy-L-kynurenine + H2O = 3-hydroxyanthranilate + L-alanine + H(+). It functions in the pathway amino-acid degradation; L-kynurenine degradation; L-alanine and anthranilate from L-kynurenine: step 1/1. Its pathway is cofactor biosynthesis; NAD(+) biosynthesis; quinolinate from L-kynurenine: step 2/3. In terms of biological role, catalyzes the cleavage of L-kynurenine (L-Kyn) and L-3-hydroxykynurenine (L-3OHKyn) into anthranilic acid (AA) and 3-hydroxyanthranilic acid (3-OHAA), respectively. The sequence is that of Kynureninase from Bacillus cereus (strain ATCC 10987 / NRS 248).